The sequence spans 446 residues: MKEIETLKEEYPLLNKLIATEEVFWVNPNMEKYETAIKDSPLSEENVKDAEERLKRFASYIAKVFPETKETKGIIESPLLKIPSMKQALEKNYEQPILGELLLKCDSHLPISGSIKARGGIYEVLKHAEQLALQHGMLTEEDDYSILDSDTCREFFATYSIAVGSTGNLGLSIGIMSAKLGFNVTVHMSADAKQWKKDLLRSKGVNVIEYEADYSKAVEEGRRQADADPSCYFVDDENSHDLFLGYAVAASRLQKQLEELKIVVDEEHPLFVYLPCGVGGGPGGVAFGLKLLYKDNVHCFFAEPTHSPCMLIGLMTGLHDKIAVQDIGIDNVTDADGLAVGRPSGFVGKTMEPFLSGNYTVSDEELYRLLKELADTENIYLEPSALAGMIGPVKVCKEDAYLQKQQLMEKVQKGTHIVWGTGGSMVPEDVMNGYYKTGEALTILEK.

K116 is modified (N6-(pyridoxal phosphate)lysine).

The protein belongs to the serine/threonine dehydratase family. DsdA subfamily. Requires pyridoxal 5'-phosphate as cofactor.

The enzyme catalyses D-serine = pyruvate + NH4(+). The polypeptide is Probable D-serine dehydratase (Bacillus cereus (strain ZK / E33L)).